The sequence spans 809 residues: AP-3 complex subunit beta (809 aa).

HEAT repeat units follow at residues 37 to 76 (YYSQNINPQQLVTLLNSRNSREVRDAMKRIISIMASDDDS), 112 to 151 (DPNLTLLSINSLQKSLSDSNSELRCFALSALSDMKMSSLA), 153 to 186 (IILHTVKKLVTDPSAMVRGEVALAIIKLYRAGKN), 187 to 224 (DYHEELLDILKELMADTDPKVISCAVLAYKECYADHLE), and 524 to 561 (KICPDVLRRLIQNFSNEGPETRCQILVLSAKLLSYDID). Ser-693, Ser-698, Ser-724, and Ser-726 each carry phosphoserine. Disordered regions lie at residues 708 to 739 (FTSSSNAKLTGINDGDSNSISGKGNVNTFTSQ) and 763 to 809 (PRKI…HLEL). The segment covering 722–739 (GDSNSISGKGNVNTFTSQ) has biased composition (polar residues). Residues 772 to 791 (ESSDEDEDESEESSDDDEYS) are compositionally biased toward acidic residues. Over residues 792 to 809 (DSSLGTSSSGTSSSHLEL) the composition is skewed to low complexity.

This sequence belongs to the adaptor complexes large subunit family. Adaptor protein complex 3 (AP-3) is a heterotetramer composed of 2 large adaptins (APL5 and APL6), a medium adaptin (APM3) and a small adaptin (APS3). In terms of processing, pyrophosphorylated by 5-diphosphoinositol pentakisphosphate (5-IP7). Serine pyrophosphorylation is achieved by Mg(2+)-dependent, but enzyme independent transfer of a beta-phosphate from a inositol pyrophosphate to a pre-phosphorylated serine residue.

The protein resides in the golgi apparatus. It localises to the cytoplasmic vesicle. It is found in the clathrin-coated vesicle membrane. Functionally, part of the AP-3 complex, an adaptor-related complex which is not clathrin-associated. The complex is associated with the Golgi region as well as more peripheral structures. It facilitates the budding of vesicles from the Golgi membrane and may be directly involved in trafficking to the vacuole. Required for the transport via the ALP pathway, which directs the transport of the cargo proteins PHO8 and VAM3 to the vacuole. The protein is AP-3 complex subunit beta (APL6) of Saccharomyces cerevisiae (strain ATCC 204508 / S288c) (Baker's yeast).